The following is a 37-amino-acid chain: Large ribosomal subunit protein bL36 (37 aa).

The protein belongs to the bacterial ribosomal protein bL36 family.

The protein is Large ribosomal subunit protein bL36 of Alkalilimnicola ehrlichii (strain ATCC BAA-1101 / DSM 17681 / MLHE-1).